A 45-amino-acid chain; its full sequence is Large ribosomal subunit protein bL34c (45 aa).

Positions 1–10 are enriched in polar residues; sequence MSKGFSNGTN. Residues 1–45 are disordered; it reads MSKGFSNGTNIKRVRKSGFRARMSNSSGRKILNSRRRKQRKKIAL. Positions 32-45 are enriched in basic residues; sequence LNSRRRKQRKKIAL.

This sequence belongs to the bacterial ribosomal protein bL34 family.

It is found in the plastid. Its subcellular location is the chloroplast. The protein is Large ribosomal subunit protein bL34c of Gracilaria tenuistipitata var. liui (Red alga).